Reading from the N-terminus, the 847-residue chain is Follistatin-related protein 5 (847 aa).

An N-terminal signal peptide occupies residues Met1 to Gly20. The Kazal-like domain occupies Gly83–Phe135. 3 disulfides stabilise this stretch: Cys89–Cys119, Cys93–Cys112, and Cys101–Cys133. EF-hand domains lie at Arg175–Gly210 and Lys211–Gln246. Asp188, Asp190, Asn192, Glu199, Asp226, Asn228, Asp230, His232, and Glu237 together coordinate Ca(2+). 2 Ig-like domains span residues Pro250–Val337 and Pro341–Ser426. 2 disulfides stabilise this stretch: Cys270–Cys321 and Cys362–Cys413. Asn318 and Asn394 each carry an N-linked (GlcNAc...) asparagine glycan.

The protein resides in the secreted. The sequence is that of Follistatin-related protein 5 (FSTL5) from Homo sapiens (Human).